The primary structure comprises 341 residues: Methionine import ATP-binding protein MetN 2 (341 aa).

The 240-residue stretch at 2-241 (IELKEVVKEY…PQHTVTKRFV (240 aa)) folds into the ABC transporter domain. 38–45 (GFSGAGKS) lines the ATP pocket.

Belongs to the ABC transporter superfamily. Methionine importer (TC 3.A.1.24) family. The complex is composed of two ATP-binding proteins (MetN), two transmembrane proteins (MetI) and a solute-binding protein (MetQ).

The protein localises to the cell membrane. It catalyses the reaction L-methionine(out) + ATP + H2O = L-methionine(in) + ADP + phosphate + H(+). It carries out the reaction D-methionine(out) + ATP + H2O = D-methionine(in) + ADP + phosphate + H(+). Functionally, part of the ABC transporter complex MetNIQ involved in methionine import. Responsible for energy coupling to the transport system. This is Methionine import ATP-binding protein MetN 2 from Staphylococcus aureus (strain bovine RF122 / ET3-1).